The sequence spans 190 residues: Ribosome maturation factor RimP (190 aa).

Residues 159-190 (ELELAGGIPEGRVAPADADASEDEEVVEGLDK) form a disordered region. A compositionally biased stretch (acidic residues) spans 177–190 (DASEDEEVVEGLDK).

This sequence belongs to the RimP family.

The protein localises to the cytoplasm. Functionally, required for maturation of 30S ribosomal subunits. The protein is Ribosome maturation factor RimP of Rhodococcus opacus (strain B4).